Consider the following 601-residue polypeptide: Terpinolene synthase, chloroplastic (601 aa).

A chloroplast-targeting transit peptide spans 1–32; the sequence is MSTFVISNSMHVGISFSFLHKLPQTPPPQVVC. Residues Asp-354, Asp-358, Asp-498, Thr-502, and Glu-506 each coordinate Mg(2+). The DDXXD motif motif lies at 354 to 358; sequence DDVYD.

This sequence belongs to the terpene synthase family. Tpsd subfamily. Requires Mg(2+) as cofactor. Mn(2+) serves as cofactor.

It is found in the plastid. The protein localises to the chloroplast. It carries out the reaction (2E)-geranyl diphosphate = terpinolene + diphosphate. It functions in the pathway secondary metabolite biosynthesis; terpenoid biosynthesis. Its function is as follows. Monoterpene synthase that catalyzes the formation of terpinolene and other monoterpenes from geranyl diphosphate. The sequence is that of Terpinolene synthase, chloroplastic (TES) from Ocimum basilicum (Sweet basil).